The sequence spans 268 residues: Tryptophan synthase alpha chain (268 aa).

Active-site proton acceptor residues include Glu49 and Asp60.

It belongs to the TrpA family. Tetramer of two alpha and two beta chains.

The catalysed reaction is (1S,2R)-1-C-(indol-3-yl)glycerol 3-phosphate + L-serine = D-glyceraldehyde 3-phosphate + L-tryptophan + H2O. Its pathway is amino-acid biosynthesis; L-tryptophan biosynthesis; L-tryptophan from chorismate: step 5/5. Its function is as follows. The alpha subunit is responsible for the aldol cleavage of indoleglycerol phosphate to indole and glyceraldehyde 3-phosphate. The polypeptide is Tryptophan synthase alpha chain (Escherichia coli O6:K15:H31 (strain 536 / UPEC)).